A 40-amino-acid polypeptide reads, in one-letter code: Dolichyl-diphosphooligosaccharide--protein glycosyltransferase subunit 4 (40 aa).

Topologically, residues 1-4 (MITD) are lumenal. The helical transmembrane segment at 5-25 (VQLAIFSNVLGVFLFLLVVAY) threads the bilayer. Residues 26-40 (HYINANTGKSIIKSK) lie on the Cytoplasmic side of the membrane.

It belongs to the OST4 family. In terms of assembly, component of the oligosaccharyltransferase (OST) complex.

It localises to the endoplasmic reticulum membrane. In terms of biological role, subunit of the oligosaccharyl transferase (OST) complex that catalyzes the initial transfer of a defined glycan (Glc(3)Man(9)GlcNAc(2) in eukaryotes) from the lipid carrier dolichol-pyrophosphate to an asparagine residue within an Asn-X-Ser/Thr consensus motif in nascent polypeptide chains, the first step in protein N-glycosylation. N-glycosylation occurs cotranslationally and the complex associates with the Sec61 complex at the channel-forming translocon complex that mediates protein translocation across the endoplasmic reticulum (ER). All subunits are required for a maximal enzyme activity. The protein is Dolichyl-diphosphooligosaccharide--protein glycosyltransferase subunit 4 of Drosophila grimshawi (Hawaiian fruit fly).